The chain runs to 256 residues: uncharacterized protein (256 aa).

This is an uncharacterized protein from Bacillus subtilis (strain 168).